Consider the following 321-residue polypeptide: Glycerol-3-phosphate dehydrogenase [NAD(P)+] (321 aa).

Residues Ser-14, Phe-15, Arg-35, and Lys-109 each contribute to the NADPH site. 2 residues coordinate sn-glycerol 3-phosphate: Lys-109 and Gly-137. Ala-141 contacts NADPH. 5 residues coordinate sn-glycerol 3-phosphate: Lys-192, Asp-252, Ser-262, Arg-263, and Asn-264. Lys-192 functions as the Proton acceptor in the catalytic mechanism. Arg-263 lines the NADPH pocket. Positions 287 and 289 each coordinate NADPH.

This sequence belongs to the NAD-dependent glycerol-3-phosphate dehydrogenase family.

It is found in the cytoplasm. It carries out the reaction sn-glycerol 3-phosphate + NAD(+) = dihydroxyacetone phosphate + NADH + H(+). The enzyme catalyses sn-glycerol 3-phosphate + NADP(+) = dihydroxyacetone phosphate + NADPH + H(+). Its pathway is membrane lipid metabolism; glycerophospholipid metabolism. Catalyzes the reduction of the glycolytic intermediate dihydroxyacetone phosphate (DHAP) to sn-glycerol 3-phosphate (G3P), the key precursor for phospholipid synthesis. In Rickettsia felis (strain ATCC VR-1525 / URRWXCal2) (Rickettsia azadi), this protein is Glycerol-3-phosphate dehydrogenase [NAD(P)+].